Reading from the N-terminus, the 248-residue chain is GTP cyclohydrolase 1 type 2 homolog (248 aa).

A divalent metal cation contacts are provided by His-64, His-65, Asp-101, His-216, and Glu-220.

The protein belongs to the GTP cyclohydrolase I type 2/NIF3 family. In terms of assembly, homohexamer.

The chain is GTP cyclohydrolase 1 type 2 homolog from Borreliella burgdorferi (strain ATCC 35210 / DSM 4680 / CIP 102532 / B31) (Borrelia burgdorferi).